We begin with the raw amino-acid sequence, 155 residues long: Ribosomal RNA large subunit methyltransferase H (155 aa).

S-adenosyl-L-methionine contacts are provided by residues Leu-72, Gly-103, and 122-127 (LSDLTL).

The protein belongs to the RNA methyltransferase RlmH family. In terms of assembly, homodimer.

The protein localises to the cytoplasm. The catalysed reaction is pseudouridine(1915) in 23S rRNA + S-adenosyl-L-methionine = N(3)-methylpseudouridine(1915) in 23S rRNA + S-adenosyl-L-homocysteine + H(+). Its function is as follows. Specifically methylates the pseudouridine at position 1915 (m3Psi1915) in 23S rRNA. The sequence is that of Ribosomal RNA large subunit methyltransferase H from Delftia acidovorans (strain DSM 14801 / SPH-1).